The primary structure comprises 264 residues: Non-homologous end-joining factor xrc4 (264 aa).

The span at Arg173–Tyr186 shows a compositional bias: basic and acidic residues. A disordered region spans residues Arg173 to Glu264. Positions Gln200–Ser209 are enriched in polar residues. Residues Asp248–Glu264 are compositionally biased toward basic and acidic residues.

It belongs to the XRCC4-XLF family. XRCC4 subfamily. As to quaternary structure, interacts with lig4; the interaction is direct.

It is found in the nucleus. Its function is as follows. Involved in double-strand break repair via non-homologous end joining (NHEJ); the repair of a double-strand break in DNA in which the two broken ends are rejoined with little or no sequence complementarity. The protein is Non-homologous end-joining factor xrc4 of Schizosaccharomyces pombe (strain 972 / ATCC 24843) (Fission yeast).